The chain runs to 1190 residues: Wings apart-like protein homolog (1190 aa).

Disordered regions lie at residues 1 to 23 (MTSR…FDEV) and 46 to 82 (QKRP…DESL). The interval 1–659 (MTSRFGKTYS…ENQEFTDDIE (659 aa)) is mediates interaction with the cohesin complex. A compositionally biased stretch (basic and acidic residues) spans 54-66 (DIQEIPKKPKVEE). Residues 73–75 (FGF) carry the FGF motif 1 motif. A Phosphoserine modification is found at Ser77. An N6-acetyllysine modification is found at Lys168. Phosphoserine is present on residues Ser221, Ser223, and Ser226. A coiled-coil region spans residues 260-286 (LLEMKDDDFKNRLENLNEAIEEDIVQS). A phosphoserine mark is found at Ser347 and Ser380. The short motif at 429–431 (FGF) is the FGF motif 2 element. Ser443 is modified (phosphoserine). An FGF motif 3 motif is present at residues 453–455 (FGF). Residues Ser459 and Ser461 each carry the phosphoserine modification. Over residues 459 to 469 (SESEDDEDDDC) the composition is skewed to acidic residues. The tract at residues 459-553 (SESEDDEDDD…SGPKRSPTKA (95 aa)) is disordered. Residues 494–509 (SNDNSQDSQSGTNNAE) are compositionally biased toward polar residues. Basic and acidic residues predominate over residues 531-540 (QGDKSKENTR). The 544-residue stretch at 626–1169 (RREDKELYTV…KKFLSFMNLT (544 aa)) folds into the WAPL domain. Positions 749 to 782 (ELEQDASSAKLLNEKDMNKIKEKIRRLCETVHNK) form a coiled coil. Ser904 bears the Phosphoserine mark.

This sequence belongs to the WAPL family. In terms of assembly, interacts with the cohesin complex throughout the cell cycle; interacts with both chromatin-bound and soluble pools of the complex. Interacts with RAD21; the interaction is direct. Interacts with PDS5A; the interaction is direct, cohesin-dependent and competitive with CDCA5/SORORIN. Interacts (via FGF motifs) with PDS5B; the interaction is direct. Interacts with a SMC1 protein (SMC1A or SMC1B) and SMC3. As to quaternary structure, (Microbial infection) Isoform 2 interacts with Epstein-Barr virus EBNA2. In terms of processing, deubiquitinated by USP37; leading to stabilization. In terms of tissue distribution, isoform 1 is highly expressed in uterine cervix tumor. Isoform 2 is widely expressed with a high level in skeletal muscle and heart.

It localises to the nucleus. It is found in the chromosome. The protein localises to the cytoplasm. Its function is as follows. Regulator of sister chromatid cohesion in mitosis which negatively regulates cohesin association with chromatin. Involved in both sister chromatid cohesion during interphase and sister-chromatid resolution during early stages of mitosis. Couples DNA replication to sister chromatid cohesion. Cohesion ensures that chromosome partitioning is accurate in both meiotic and mitotic cells and plays an important role in DNA repair. This chain is Wings apart-like protein homolog, found in Homo sapiens (Human).